Consider the following 256-residue polypeptide: Small ribosomal subunit protein uS2 (256 aa).

Belongs to the universal ribosomal protein uS2 family.

The sequence is that of Small ribosomal subunit protein uS2 from Rhizobium rhizogenes (strain K84 / ATCC BAA-868) (Agrobacterium radiobacter).